The sequence spans 230 residues: D-glycero-alpha-D-manno-heptose 1-phosphate guanylyltransferase (230 aa).

It belongs to the D-alpha-D-heptose-1-P guanylyltransferase family.

The enzyme catalyses D-glycero-alpha-D-manno-heptose 1-phosphate + GTP + H(+) = GDP-D-glycero-alpha-D-manno-heptose + diphosphate. The protein operates within nucleotide-sugar biosynthesis; GDP-D-glycero-alpha-D-manno-heptose biosynthesis; GDP-D-glycero-alpha-D-manno-heptose from D-glycero-alpha-D-manno-heptose 7-phosphate: step 3/3. It functions in the pathway cell surface structure biogenesis; S-layer biogenesis. In terms of biological role, catalyzes the GDP transfer from GTP to D-glycero-alpha-D-manno-heptose 1-phosphate, yielding GDP-D-alpha-D-heptose. Cannot use ATP, CTP, dTTP or UTP as substrate. The sequence is that of D-glycero-alpha-D-manno-heptose 1-phosphate guanylyltransferase (hddC) from Aneurinibacillus thermoaerophilus.